The sequence spans 272 residues: Ribosomal RNA small subunit methyltransferase A (272 aa).

S-adenosyl-L-methionine is bound by residues Asn18, Leu20, Gly45, Glu66, Asp91, and Asn113.

It belongs to the class I-like SAM-binding methyltransferase superfamily. rRNA adenine N(6)-methyltransferase family. RsmA subfamily.

The protein localises to the cytoplasm. It catalyses the reaction adenosine(1518)/adenosine(1519) in 16S rRNA + 4 S-adenosyl-L-methionine = N(6)-dimethyladenosine(1518)/N(6)-dimethyladenosine(1519) in 16S rRNA + 4 S-adenosyl-L-homocysteine + 4 H(+). Its function is as follows. Specifically dimethylates two adjacent adenosines (A1518 and A1519) in the loop of a conserved hairpin near the 3'-end of 16S rRNA in the 30S particle. May play a critical role in biogenesis of 30S subunits. The chain is Ribosomal RNA small subunit methyltransferase A from Photorhabdus laumondii subsp. laumondii (strain DSM 15139 / CIP 105565 / TT01) (Photorhabdus luminescens subsp. laumondii).